The sequence spans 298 residues: Protease HtpX homolog (298 aa).

Helical transmembrane passes span 14–34 (VVLL…AGYL) and 39–59 (YAMG…SMIF). A Zn(2+)-binding site is contributed by H143. E144 is an active-site residue. H147 contacts Zn(2+). Transmembrane regions (helical) follow at residues 158 to 178 (IAVA…RMLW) and 197 to 217 (IITL…ASLI). E226 contacts Zn(2+).

Belongs to the peptidase M48B family. Zn(2+) serves as cofactor.

It is found in the cell membrane. This Streptococcus pyogenes serotype M49 (strain NZ131) protein is Protease HtpX homolog.